The chain runs to 135 residues: Large ribosomal subunit protein uL16 (135 aa).

The protein belongs to the universal ribosomal protein uL16 family. In terms of assembly, part of the 50S ribosomal subunit.

Binds 23S rRNA and is also seen to make contacts with the A and possibly P site tRNAs. The protein is Large ribosomal subunit protein uL16 of Desulforapulum autotrophicum (strain ATCC 43914 / DSM 3382 / VKM B-1955 / HRM2) (Desulfobacterium autotrophicum).